We begin with the raw amino-acid sequence, 395 residues long: Putative 8-amino-7-oxononanoate synthase (395 aa).

Arg22 contributes to the substrate binding site. Gly109–Tyr110 contributes to the pyridoxal 5'-phosphate binding site. Residue His139 participates in substrate binding. Residues Ser187, Asp212–His215, and Thr241–Lys244 contribute to the pyridoxal 5'-phosphate site. Lys244 is subject to N6-(pyridoxal phosphate)lysine. Thr358 provides a ligand contact to substrate.

This sequence belongs to the class-II pyridoxal-phosphate-dependent aminotransferase family. BioF subfamily. As to quaternary structure, homodimer. The cofactor is pyridoxal 5'-phosphate.

It catalyses the reaction 6-carboxyhexanoyl-[ACP] + L-alanine + H(+) = (8S)-8-amino-7-oxononanoate + holo-[ACP] + CO2. The protein operates within cofactor biosynthesis; biotin biosynthesis. Functionally, catalyzes the decarboxylative condensation of pimeloyl-[acyl-carrier protein] and L-alanine to produce 8-amino-7-oxononanoate (AON), [acyl-carrier protein], and carbon dioxide. This Magnetococcus marinus (strain ATCC BAA-1437 / JCM 17883 / MC-1) protein is Putative 8-amino-7-oxononanoate synthase (bioF).